Here is a 299-residue protein sequence, read N- to C-terminus: AUGMIN subunit 1 (299 aa).

Ser2 is modified (N-acetylserine). 2 coiled-coil regions span residues 76–96 (RLKASEYRAQAARIREILESA) and 164–184 (RKAIQRLTYLKKILAQLEDDV).

The protein belongs to the HAUS1 family. As to quaternary structure, part of the augmin complex composed of 8 subunits. The complex acts on microtubules and interacts with gamma-tubulin in spindles and the phragmoplast. Interacts with AUG3.

It localises to the cytoplasm. The protein localises to the cytoskeleton. It is found in the spindle. The protein resides in the phragmoplast. Its function is as follows. Involved in microtubules reorganization during spindle and phragmoplast development. The chain is AUGMIN subunit 1 from Arabidopsis thaliana (Mouse-ear cress).